Consider the following 445-residue polypeptide: Serine--tRNA ligase (445 aa).

Position 250-252 (250-252 (TAE)) interacts with L-serine. 281-283 (RAE) is a binding site for ATP. Residue Glu-304 participates in L-serine binding. 368-371 (EISS) is an ATP binding site. Ser-404 provides a ligand contact to L-serine.

It belongs to the class-II aminoacyl-tRNA synthetase family. Type-1 seryl-tRNA synthetase subfamily. Homodimer. The tRNA molecule binds across the dimer.

The protein localises to the cytoplasm. It catalyses the reaction tRNA(Ser) + L-serine + ATP = L-seryl-tRNA(Ser) + AMP + diphosphate + H(+). It carries out the reaction tRNA(Sec) + L-serine + ATP = L-seryl-tRNA(Sec) + AMP + diphosphate + H(+). The protein operates within aminoacyl-tRNA biosynthesis; selenocysteinyl-tRNA(Sec) biosynthesis; L-seryl-tRNA(Sec) from L-serine and tRNA(Sec): step 1/1. Catalyzes the attachment of serine to tRNA(Ser). Is also able to aminoacylate tRNA(Sec) with serine, to form the misacylated tRNA L-seryl-tRNA(Sec), which will be further converted into selenocysteinyl-tRNA(Sec). In Azorhizobium caulinodans (strain ATCC 43989 / DSM 5975 / JCM 20966 / LMG 6465 / NBRC 14845 / NCIMB 13405 / ORS 571), this protein is Serine--tRNA ligase.